Here is a 202-residue protein sequence, read N- to C-terminus: Na(+)-translocating NADH-quinone reductase subunit E (202 aa).

6 consecutive transmembrane segments (helical) span residues 11–31 (SIFMENMALAFFLGMCTFLAV), 41–61 (LGVAVIVVLGISVPVNQIIYF), 81–101 (FLGFITFIGVIAALVQILEMV), 114–134 (GIYLPLITVNCAILGGVLFMV), 144–164 (LVYGVGSGVGWMLAIVLLAGI), and 180–200 (LGITFTTAGLMAIAFMSFSGI).

The protein belongs to the NqrDE/RnfAE family. Composed of six subunits; NqrA, NqrB, NqrC, NqrD, NqrE and NqrF.

Its subcellular location is the cell inner membrane. The enzyme catalyses a ubiquinone + n Na(+)(in) + NADH + H(+) = a ubiquinol + n Na(+)(out) + NAD(+). NQR complex catalyzes the reduction of ubiquinone-1 to ubiquinol by two successive reactions, coupled with the transport of Na(+) ions from the cytoplasm to the periplasm. NqrA to NqrE are probably involved in the second step, the conversion of ubisemiquinone to ubiquinol. The chain is Na(+)-translocating NADH-quinone reductase subunit E from Psychromonas ingrahamii (strain DSM 17664 / CCUG 51855 / 37).